The following is a 334-amino-acid chain: Glucokinase-like protein XF_1460 (334 aa).

Position 18–23 (alanine 18–threonine 23) interacts with ATP.

Belongs to the bacterial glucokinase family.

The chain is Glucokinase-like protein XF_1460 from Xylella fastidiosa (strain 9a5c).